Consider the following 138-residue polypeptide: MALLPDKEKLLRNFLRCANWEEKYLYIIELGQRLPELRDEDKSPQNSIQGCQSQVWIVMRQNAQGIIELQGDSDAAIVKGLIAVVFILYDQMTPQDIVNFDVRPWFEKMALTQHLTPSRSQGLEAMIRAIRAKAAALS.

The Cysteine persulfide intermediate role is filled by Cys51.

The protein belongs to the SufE family. In terms of assembly, homodimer. Interacts with SufS.

It is found in the cytoplasm. It functions in the pathway cofactor biosynthesis; iron-sulfur cluster biosynthesis. Functionally, participates in cysteine desulfuration mediated by SufS. Cysteine desulfuration mobilizes sulfur from L-cysteine to yield L-alanine and constitutes an essential step in sulfur metabolism for biosynthesis of a variety of sulfur-containing biomolecules. Functions as a sulfur acceptor for SufS, by mediating the direct transfer of the sulfur atom from the S-sulfanylcysteine of SufS, an intermediate product of cysteine desulfuration process. The chain is Cysteine desulfuration protein SufE from Escherichia coli O81 (strain ED1a).